A 303-amino-acid chain; its full sequence is UDP-3-O-acyl-N-acetylglucosamine deacetylase (303 aa).

Zn(2+)-binding residues include His-78, His-237, and Asp-241. Catalysis depends on His-264, which acts as the Proton donor.

It belongs to the LpxC family. Zn(2+) serves as cofactor.

The catalysed reaction is a UDP-3-O-[(3R)-3-hydroxyacyl]-N-acetyl-alpha-D-glucosamine + H2O = a UDP-3-O-[(3R)-3-hydroxyacyl]-alpha-D-glucosamine + acetate. It participates in glycolipid biosynthesis; lipid IV(A) biosynthesis; lipid IV(A) from (3R)-3-hydroxytetradecanoyl-[acyl-carrier-protein] and UDP-N-acetyl-alpha-D-glucosamine: step 2/6. Its function is as follows. Catalyzes the hydrolysis of UDP-3-O-myristoyl-N-acetylglucosamine to form UDP-3-O-myristoylglucosamine and acetate, the committed step in lipid A biosynthesis. In Xanthomonas euvesicatoria pv. vesicatoria (strain 85-10) (Xanthomonas campestris pv. vesicatoria), this protein is UDP-3-O-acyl-N-acetylglucosamine deacetylase.